The following is a 1434-amino-acid chain: DNA-directed RNA polymerase subunit beta (1434 aa).

The protein belongs to the RNA polymerase beta chain family. As to quaternary structure, the RNAP catalytic core consists of 2 alpha, 1 beta, 1 beta' and 1 omega subunit. When a sigma factor is associated with the core the holoenzyme is formed, which can initiate transcription.

The enzyme catalyses RNA(n) + a ribonucleoside 5'-triphosphate = RNA(n+1) + diphosphate. Its function is as follows. DNA-dependent RNA polymerase catalyzes the transcription of DNA into RNA using the four ribonucleoside triphosphates as substrates. This Ureaplasma urealyticum serovar 10 (strain ATCC 33699 / Western) protein is DNA-directed RNA polymerase subunit beta.